The chain runs to 294 residues: Filamin-B (294 aa).

Filamin repeat units follow at residues 1-67 (GTRL…KVRV) and 71-163 (GQAG…KAKV). Residues Ser61 and Ser157 each carry the phosphoserine modification. Lys160 participates in a covalent cross-link: Glycyl lysine isopeptide (Lys-Gly) (interchain with G-Cter in ISG15). The hinge 2 stretch occupies residues 164-198 (TGQRLVGPGSTNETSSILVESVTRSSTETCYSAIP). A self-association site, tail region spans residues 164–294 (TGQRLVGPGS…PGSPFHVTVP (131 aa)). Ser173 and Ser184 each carry phosphoserine. One copy of the Filamin 24 repeat lies at 199–293 (KASSDASKVT…IPGSPFHVTV (95 aa)). Residues Lys210 and Lys216 each carry the N6-succinyllysine modification. Lys268 carries the post-translational modification N6-acetyllysine.

It belongs to the filamin family. As to quaternary structure, homodimer. Interacts with FLNA, FLNC, INPPL1, ITGB1A, ITGB1D, ITGB3, ITGB6, MYOT, MYOZ1, PSEN1 and PSEN2. Interacts with MICALL2. Interacts with RFLNA and RFLNB. Interacts with HTLV-I viral p13 protein. Interacts with ASB2; the interaction targets FLNB for proteasomal degradation. Post-translationally, ISGylation prevents ability to interact with the upstream activators of the JNK cascade and inhibits IFNA-induced JNK signaling. Ubiquitination by a SCF-like complex containing ASB2 leads to proteasomal degradation which promotes muscle differentiation.

It is found in the cytoplasm. The protein resides in the cell cortex. The protein localises to the cytoskeleton. It localises to the myofibril. Its subcellular location is the sarcomere. It is found in the z line. Its function is as follows. Connects cell membrane constituents to the actin cytoskeleton. May promote orthogonal branching of actin filaments and links actin filaments to membrane glycoproteins. Anchors various transmembrane proteins to the actin cytoskeleton. In Oryctolagus cuniculus (Rabbit), this protein is Filamin-B (FLNB).